A 232-amino-acid polypeptide reads, in one-letter code: Probable fimbrial chaperone LpfB (232 aa).

A signal peptide spans 1 to 24 (MDRMMKSKFVALALSLFLSQSVLA).

It belongs to the periplasmic pilus chaperone family.

The protein localises to the periplasm. Part of the lpfABCC'DE fimbrial operon. LP fimbriae may participate in the interaction with eukaryotic cells by assisting in microcolony formation. The polypeptide is Probable fimbrial chaperone LpfB (lpfB) (Escherichia coli O157:H7).